A 466-amino-acid polypeptide reads, in one-letter code: SVGFKAGVKDYKLTYYTPEYETKDTDILAAFRVTPQPGVPPEEAGAAVAAESSTGTWTTVWTDGLTSLDRYKGRCYGIEPVPGEENQYIAYVAYPLDLFEEGSVTNMFTSIVGNVFGFKALRALRLEDLRIPTAYIKTFQGPPHGIQVERDKLNKYGRPLLGCTIKPKLGLSAKNYGRAVYECLRGGLDFTKDDENVNSQPFMRWRDRFLFCAEAIYKSQAETGEIKGHYLNATAGTCEEMMKRAIFARELGAPIVMHDYLTGGFTANTSLAHYCRDNGLLLHIHRAMHAVIDRQKNHGMHFRVLAKALRLSGGDHIHAGTVVGKLEGERDITLGFVDLLRDDFVEKDRSRGIYFTQDWVSLPGVLPVASGGIHVWHMPALTEIFGDDSVLQFGGGTLGHPWGNAPGAVANRVALEACVQARNEGRDLAREGNEIIREASKWSPELAAACEVWKAIKFEFEAVDTL.

Position 5 is an N6,N6,N6-trimethyllysine (K5). Substrate-binding residues include N114 and T164. K166 functions as the Proton acceptor in the catalytic mechanism. K168 lines the substrate pocket. Residues K192, D194, and E195 each coordinate Mg(2+). K192 carries the post-translational modification N6-carboxylysine. H285 functions as the Proton acceptor in the catalytic mechanism. R286, H318, and S370 together coordinate substrate.

The protein belongs to the RuBisCO large chain family. Type I subfamily. As to quaternary structure, heterohexadecamer of 8 large chains and 8 small chains; disulfide-linked. The disulfide link is formed within the large subunit homodimers. Mg(2+) is required as a cofactor. Post-translationally, the disulfide bond which can form in the large chain dimeric partners within the hexadecamer appears to be associated with oxidative stress and protein turnover.

The protein resides in the plastid. Its subcellular location is the chloroplast. The catalysed reaction is 2 (2R)-3-phosphoglycerate + 2 H(+) = D-ribulose 1,5-bisphosphate + CO2 + H2O. It catalyses the reaction D-ribulose 1,5-bisphosphate + O2 = 2-phosphoglycolate + (2R)-3-phosphoglycerate + 2 H(+). Its function is as follows. RuBisCO catalyzes two reactions: the carboxylation of D-ribulose 1,5-bisphosphate, the primary event in carbon dioxide fixation, as well as the oxidative fragmentation of the pentose substrate in the photorespiration process. Both reactions occur simultaneously and in competition at the same active site. The chain is Ribulose bisphosphate carboxylase large chain from Cucurbita pepo (Vegetable marrow).